A 247-amino-acid polypeptide reads, in one-letter code: ATP synthase subunit a, chloroplastic (247 aa).

5 helical membrane-spanning segments follow: residues 38–58 (QVLITSWVVITILLGSVLIAV), 95–115 (VPFIGTMFLFIFVSNWSGALL), 134–154 (INTTVALALLTSAAYFYAGLS), 199–219 (LVVVVLVSLVPLVVPIPVMFL), and 220–240 (GLFTSGIQALIFATLAAAYIG).

Belongs to the ATPase A chain family. In terms of assembly, F-type ATPases have 2 components, CF(1) - the catalytic core - and CF(0) - the membrane proton channel. CF(1) has five subunits: alpha(3), beta(3), gamma(1), delta(1), epsilon(1). CF(0) has four main subunits: a, b, b' and c.

The protein localises to the plastid. It is found in the chloroplast thylakoid membrane. Functionally, key component of the proton channel; it plays a direct role in the translocation of protons across the membrane. In Brachypodium distachyon (Purple false brome), this protein is ATP synthase subunit a, chloroplastic.